A 196-amino-acid chain; its full sequence is Alpha-crystallin A chain (196 aa).

Met-1 bears the N-acetylmethionine mark. Residues 1–63 (MDVTIQHPWF…RTVLDSGISE (63 aa)) form a required for complex formation with BFSP1 and BFSP2 region. Position 6 is a deamidated glutamine; partial (Gln-6). Position 45 is a phosphoserine (Ser-45). Gln-50 bears the Deamidated glutamine; partial mark. A sHSP domain is found at 76–185 (HAGNPKNNPV…GHSERAIPVS (110 aa)). Residues Lys-93 and Lys-122 each carry the N6-acetyllysine modification. Zn(2+) is bound at residue His-123. Asn-124 is subject to Deamidated asparagine; partial. Glu-125 and His-130 together coordinate Zn(2+). At Ser-145 the chain carries Phosphoserine. Residue Asn-146 is modified to Deamidated asparagine; partial. Positions 168 to 196 (KVQSGLDAGHSERAIPVSREEKPSSAPSS) are disordered. At Gln-170 the chain carries Deamidated glutamine; partial. The segment covering 176–190 (GHSERAIPVSREEKP) has biased composition (basic and acidic residues). Residue His-177 participates in Zn(2+) binding. O-linked (GlcNAc) serine glycosylation occurs at Ser-185.

This sequence belongs to the small heat shock protein (HSP20) family. In terms of assembly, heteropolymer composed of three CRYAA and one CRYAB subunits. Inter-subunit bridging via zinc ions enhances stability, which is crucial as there is no protein turn over in the lens. Can also form homodimers and homotetramers (dimers of dimers) which serve as the building blocks of homooligomers. Within homooligomers, the zinc-binding motif is created from residues of 3 different molecules. His-123 and Glu-125 from one molecule are ligands of the zinc ion, and His-130 and His-177 residues from additional molecules complete the site with tetrahedral coordination geometry. Part of a complex required for lens intermediate filament formation composed of BFSP1, BFSP2 and CRYAA. Acetylation at Lys-93 may increase chaperone activity. In terms of processing, undergoes age-dependent proteolytical cleavage at the C-terminus.

It localises to the cytoplasm. It is found in the nucleus. Contributes to the transparency and refractive index of the lens. Acts as a chaperone, preventing aggregation of various proteins under a wide range of stress conditions. Required for the correct formation of lens intermediate filaments as part of a complex composed of BFSP1, BFSP2 and CRYAA. The polypeptide is Alpha-crystallin A chain (Cryaa) (Mus musculus (Mouse)).